Consider the following 251-residue polypeptide: MGRPLEGQPLRALDLYPEPAFLRSGKDPKSSPASSPSFAVLGPEVRSTGGQAGSRRRPSAPCSQDRAAAEGAPALLGGSPSSGSPGHPPGSAFGVEAGCRALNVSEHARGGFALGLPFGLSGGAYLFLLLDGAGDPKPTPEAPISSADGRAWFPSESSWQLPQLPAGSTSGSEPRARPGLGPRQLLTGPRDGAAGQGPGRGLTARLGREREIDCGPRQAGHGGTATDTGRAGSGARHRPPRDRGTPGLRTH.

2 disordered regions span residues 1 to 92 (MGRP…PGSA) and 137 to 251 (KPTP…LRTH). Over residues 69–92 (AEGAPALLGGSPSSGSPGHPPGSA) the composition is skewed to low complexity. Residues 155-172 (SESSWQLPQLPAGSTSGS) are compositionally biased toward polar residues.

This is an uncharacterized protein from Homo sapiens (Human).